Reading from the N-terminus, the 443-residue chain is UDP-N-acetylmuramate--L-alanine ligase (443 aa).

An ATP-binding site is contributed by G110–S116.

It belongs to the MurCDEF family.

The protein localises to the cytoplasm. The catalysed reaction is UDP-N-acetyl-alpha-D-muramate + L-alanine + ATP = UDP-N-acetyl-alpha-D-muramoyl-L-alanine + ADP + phosphate + H(+). It participates in cell wall biogenesis; peptidoglycan biosynthesis. Functionally, cell wall formation. This is UDP-N-acetylmuramate--L-alanine ligase from Streptococcus agalactiae serotype III (strain NEM316).